A 174-amino-acid chain; its full sequence is Large ribosomal subunit protein bL17 (174 aa).

This sequence belongs to the bacterial ribosomal protein bL17 family. Part of the 50S ribosomal subunit. Contacts protein L32.

This chain is Large ribosomal subunit protein bL17, found in Ruminiclostridium cellulolyticum (strain ATCC 35319 / DSM 5812 / JCM 6584 / H10) (Clostridium cellulolyticum).